Consider the following 240-residue polypeptide: uncharacterized protein (240 aa).

The signal sequence occupies residues 1 to 17 (MRMAFMLLALLFSFRNA).

This is an uncharacterized protein from Treponema pallidum (strain Nichols).